Reading from the N-terminus, the 480-residue chain is Proline--tRNA ligase (480 aa).

It belongs to the class-II aminoacyl-tRNA synthetase family. ProS type 3 subfamily. Homodimer.

The protein localises to the cytoplasm. The catalysed reaction is tRNA(Pro) + L-proline + ATP = L-prolyl-tRNA(Pro) + AMP + diphosphate. In terms of biological role, catalyzes the attachment of proline to tRNA(Pro) in a two-step reaction: proline is first activated by ATP to form Pro-AMP and then transferred to the acceptor end of tRNA(Pro). The sequence is that of Proline--tRNA ligase from Chloroflexus aurantiacus (strain ATCC 29364 / DSM 637 / Y-400-fl).